A 360-amino-acid chain; its full sequence is uncharacterized protein (360 aa).

An ABC transporter domain is found at 4–235; that stretch reads LSLQHIQKIY…PANMFVAGFI (232 aa). Residue 37–44 coordinates ATP; sequence GPSGCGKS.

Belongs to the ABC transporter superfamily.

This is an uncharacterized protein from Escherichia coli O157:H7.